The primary structure comprises 280 residues: uncharacterized protein (280 aa).

The protein belongs to the metallo-dependent hydrolases superfamily.

This is an uncharacterized protein from Methanocaldococcus jannaschii (strain ATCC 43067 / DSM 2661 / JAL-1 / JCM 10045 / NBRC 100440) (Methanococcus jannaschii).